We begin with the raw amino-acid sequence, 435 residues long: Methylenetetrahydrofolate--tRNA-(uracil-5-)-methyltransferase TrmFO (435 aa).

10–15 (GAGLAG) is a binding site for FAD.

The protein belongs to the MnmG family. TrmFO subfamily. FAD is required as a cofactor.

It is found in the cytoplasm. The enzyme catalyses uridine(54) in tRNA + (6R)-5,10-methylene-5,6,7,8-tetrahydrofolate + NADH + H(+) = 5-methyluridine(54) in tRNA + (6S)-5,6,7,8-tetrahydrofolate + NAD(+). It carries out the reaction uridine(54) in tRNA + (6R)-5,10-methylene-5,6,7,8-tetrahydrofolate + NADPH + H(+) = 5-methyluridine(54) in tRNA + (6S)-5,6,7,8-tetrahydrofolate + NADP(+). Catalyzes the folate-dependent formation of 5-methyl-uridine at position 54 (M-5-U54) in all tRNAs. The protein is Methylenetetrahydrofolate--tRNA-(uracil-5-)-methyltransferase TrmFO of Halalkalibacterium halodurans (strain ATCC BAA-125 / DSM 18197 / FERM 7344 / JCM 9153 / C-125) (Bacillus halodurans).